A 214-amino-acid chain; its full sequence is MEEEKNWIVVPTWRIPGRLEKWHSLIKHLKYNTKDLQKACYVPHHKVGWAWWTCSRVIFPLKDEAHLEVQGYWNLTPEKGWLSTYAVRITWYSRNFWTDVTPDYADTLLHGTYFPCFSEGEVRRAIRGEKLLSCCKFPKAHKNQVPSLQYLALTVVSHVRSQGENPTWKQWRRNNRRGLRLARQNSRRNKQGSSESFAEGTNFPGLAKVLGILA.

Phosphothreonine; by host is present on Thr-98. An HCCH motif motif is present at residues 110 to 141; sequence HGTYFPCFSEGEVRRAIRGEKLLSCCKFPKAH. Position 147 is a phosphoserine; by host (Ser-147). Positions 147-156 match the BC-box-like motif motif; the sequence is SLQYLALTVV. Residues 154-166 are multimerization; sequence TVVSHVRSQGENP.

The protein belongs to the primate lentivirus group Vif protein family. In terms of assembly, homomultimer; in vitro and presumably in vivo. Interacts with viral Pr55Gag precursor and host APOBEC3G. The interaction between Vif and APOBEC3G is species-specific, which may play a role in restricting the replication of SIV to their host. Forms an E3 ligase complex by interacting with host CUL5 and elongin BC complex (ELOB and ELOC). Post-translationally, processed in virion by the viral protease. Highly phosphorylated on serine and threonine residues. In terms of processing, polyubiquitinated and degraded by the proteasome in the presence of APOBEC3G.

It localises to the host cytoplasm. It is found in the host cell membrane. The protein localises to the virion. Its function is as follows. Counteracts the innate antiviral activity of APOBEC3G. Forms a complex with host APOBEC3G thus preventing the entry of this lethally hypermutating enzyme into progeny virions. Functions as an adapter molecule, recruiting APOBEC3G to the ubiquitin-proteasome machinery. Targets APOBEC3G for degradation through the assembly with elongin BC complex, CUL5 and RBX1. Binds viral RNA and affects the stability of viral nucleoprotein core. May play a role in viral morphology. In Simian immunodeficiency virus (isolate PBj14/BCL-3) (SIV-sm), this protein is Virion infectivity factor (vif).